We begin with the raw amino-acid sequence, 252 residues long: uncharacterized protein (252 aa).

Leucine 16–isoleucine 40 provides a ligand contact to NADP(+). Serine 152 provides a ligand contact to substrate. Tyrosine 165 serves as the catalytic Proton acceptor.

This sequence belongs to the short-chain dehydrogenases/reductases (SDR) family.

This is an uncharacterized protein from Escherichia coli (strain K12).